A 140-amino-acid chain; its full sequence is 3-hydroxyacyl-[acyl-carrier-protein] dehydratase FabZ (140 aa).

Residue His-48 is part of the active site.

Belongs to the thioester dehydratase family. FabZ subfamily.

It localises to the cytoplasm. The catalysed reaction is a (3R)-hydroxyacyl-[ACP] = a (2E)-enoyl-[ACP] + H2O. Functionally, involved in unsaturated fatty acids biosynthesis. Catalyzes the dehydration of short chain beta-hydroxyacyl-ACPs and long chain saturated and unsaturated beta-hydroxyacyl-ACPs. The protein is 3-hydroxyacyl-[acyl-carrier-protein] dehydratase FabZ of Pelotomaculum thermopropionicum (strain DSM 13744 / JCM 10971 / SI).